The chain runs to 254 residues: Trypsin 3A1 (254 aa).

Residues 1 to 20 (MNQFLFVSFCALLGLSQVSA) form the signal peptide. Residues 21-27 (ATLSSGR) constitute a propeptide, activation peptide. The region spanning 28–253 (IVGGFQIDIA…VRQWIREVSE (226 aa)) is the Peptidase S1 domain. Cys-53 and Cys-69 are disulfide-bonded. Active-site charge relay system residues include His-68 and Asp-113. Intrachain disulfides connect Cys-178-Cys-194 and Cys-205-Cys-229. Ser-209 serves as the catalytic Charge relay system.

Belongs to the peptidase S1 family. In terms of tissue distribution, midgut.

The protein localises to the secreted. Its subcellular location is the extracellular space. It carries out the reaction Preferential cleavage: Arg-|-Xaa, Lys-|-Xaa.. In terms of biological role, major function may be to aid in digestion of the blood meal. This chain is Trypsin 3A1, found in Aedes aegypti (Yellowfever mosquito).